The sequence spans 140 residues: Nucleoside diphosphate kinase (140 aa).

Residues Lys11, Phe59, Arg87, Thr93, Arg104, and Asn114 each contribute to the ATP site. Residue His117 is the Pros-phosphohistidine intermediate of the active site.

This sequence belongs to the NDK family. In terms of assembly, homotetramer. Requires Mg(2+) as cofactor.

It localises to the cytoplasm. It carries out the reaction a 2'-deoxyribonucleoside 5'-diphosphate + ATP = a 2'-deoxyribonucleoside 5'-triphosphate + ADP. The enzyme catalyses a ribonucleoside 5'-diphosphate + ATP = a ribonucleoside 5'-triphosphate + ADP. In terms of biological role, major role in the synthesis of nucleoside triphosphates other than ATP. The ATP gamma phosphate is transferred to the NDP beta phosphate via a ping-pong mechanism, using a phosphorylated active-site intermediate. In Brucella canis (strain ATCC 23365 / NCTC 10854 / RM-666), this protein is Nucleoside diphosphate kinase.